The chain runs to 352 residues: UDP-N-acetylglucosamine--N-acetylmuramyl-(pentapeptide) pyrophosphoryl-undecaprenol N-acetylglucosamine transferase (352 aa).

UDP-N-acetyl-alpha-D-glucosamine-binding positions include 14–16 (TGG), N124, R164, S185, and Q285.

It belongs to the glycosyltransferase 28 family. MurG subfamily.

The protein resides in the cell inner membrane. It catalyses the reaction di-trans,octa-cis-undecaprenyl diphospho-N-acetyl-alpha-D-muramoyl-L-alanyl-D-glutamyl-meso-2,6-diaminopimeloyl-D-alanyl-D-alanine + UDP-N-acetyl-alpha-D-glucosamine = di-trans,octa-cis-undecaprenyl diphospho-[N-acetyl-alpha-D-glucosaminyl-(1-&gt;4)]-N-acetyl-alpha-D-muramoyl-L-alanyl-D-glutamyl-meso-2,6-diaminopimeloyl-D-alanyl-D-alanine + UDP + H(+). It participates in cell wall biogenesis; peptidoglycan biosynthesis. Its function is as follows. Cell wall formation. Catalyzes the transfer of a GlcNAc subunit on undecaprenyl-pyrophosphoryl-MurNAc-pentapeptide (lipid intermediate I) to form undecaprenyl-pyrophosphoryl-MurNAc-(pentapeptide)GlcNAc (lipid intermediate II). The chain is UDP-N-acetylglucosamine--N-acetylmuramyl-(pentapeptide) pyrophosphoryl-undecaprenol N-acetylglucosamine transferase from Chlamydia trachomatis serovar A (strain ATCC VR-571B / DSM 19440 / HAR-13).